The following is a 198-amino-acid chain: Recombination protein RecR (198 aa).

Residues 57–72 form a C4-type zinc finger; that stretch reads CSICGRLTDDDPCSIC. In terms of domain architecture, Toprim spans 80 to 175; that stretch reads TTILVLEDSR…KVTRLARGLA (96 aa).

Belongs to the RecR family.

In terms of biological role, may play a role in DNA repair. It seems to be involved in an RecBC-independent recombinational process of DNA repair. It may act with RecF and RecO. This is Recombination protein RecR from Streptococcus pneumoniae (strain 70585).